We begin with the raw amino-acid sequence, 303 residues long: Acetylglutamate kinase (303 aa).

Substrate contacts are provided by residues 76–77 (GG), Arg98, and Asn199.

The protein belongs to the acetylglutamate kinase family. ArgB subfamily.

It is found in the cytoplasm. It carries out the reaction N-acetyl-L-glutamate + ATP = N-acetyl-L-glutamyl 5-phosphate + ADP. It participates in amino-acid biosynthesis; L-arginine biosynthesis; N(2)-acetyl-L-ornithine from L-glutamate: step 2/4. Functionally, catalyzes the ATP-dependent phosphorylation of N-acetyl-L-glutamate. The polypeptide is Acetylglutamate kinase (Clavibacter michiganensis subsp. michiganensis (strain NCPPB 382)).